We begin with the raw amino-acid sequence, 268 residues long: Ubiquinone biosynthesis protein COQ4 homolog, mitochondrial (268 aa).

His-171, Asp-172, His-175, and Glu-187 together coordinate Zn(2+).

The protein belongs to the COQ4 family. In terms of assembly, component of a multi-subunit COQ enzyme complex. It depends on Zn(2+) as a cofactor.

It is found in the mitochondrion inner membrane. It catalyses the reaction a 4-hydroxy-3-methoxy-5-(all-trans-polyprenyl)benzoate + H(+) = a 2-methoxy-6-(all-trans-polyprenyl)phenol + CO2. It participates in cofactor biosynthesis; ubiquinone biosynthesis. Its function is as follows. Lyase that catalyzes the C1-decarboxylation of 4-hydroxy-3-methoxy-5-(all-trans-polyprenyl)benzoic acid into 2-methoxy-6-(all-trans-polyprenyl)phenol during ubiquinone biosynthesis. The protein is Ubiquinone biosynthesis protein COQ4 homolog, mitochondrial of Drosophila melanogaster (Fruit fly).